We begin with the raw amino-acid sequence, 105 residues long: Small ribosomal subunit protein uS10 (105 aa).

This sequence belongs to the universal ribosomal protein uS10 family. As to quaternary structure, part of the 30S ribosomal subunit.

Involved in the binding of tRNA to the ribosomes. This is Small ribosomal subunit protein uS10 from Cyanothece sp. (strain PCC 7425 / ATCC 29141).